The chain runs to 129 residues: Fluoride-specific ion channel FluC (129 aa).

Helical transmembrane passes span 20-40 (WFLG…TLAA), 67-87 (LLII…TAEI), and 96-116 (IMTA…MMLL). Positions 75 and 78 each coordinate Na(+).

Belongs to the fluoride channel Fluc/FEX (TC 1.A.43) family.

Its subcellular location is the cell inner membrane. It carries out the reaction fluoride(in) = fluoride(out). Na(+) is not transported, but it plays an essential structural role and its presence is essential for fluoride channel function. In terms of biological role, fluoride-specific ion channel. Important for reducing fluoride concentration in the cell, thus reducing its toxicity. The sequence is that of Fluoride-specific ion channel FluC from Desulfovibrio desulfuricans (strain ATCC 27774 / DSM 6949 / MB).